The chain runs to 178 residues: Interleukin-10 (178 aa).

Positions Met-1–Ala-18 are cleaved as a signal peptide. 2 disulfide bridges follow: Cys-30–Cys-126 and Cys-80–Cys-132. An N-linked (GlcNAc...) asparagine glycan is attached at Asn-134.

It belongs to the IL-10 family. As to quaternary structure, homodimer. Interacts with IL10RA and IL10RB.

It is found in the secreted. In terms of biological role, major immune regulatory cytokine that acts on many cells of the immune system where it has profound anti-inflammatory functions, limiting excessive tissue disruption caused by inflammation. Mechanistically, IL10 binds to its heterotetrameric receptor comprising IL10RA and IL10RB leading to JAK1 and STAT2-mediated phosphorylation of STAT3. In turn, STAT3 translocates to the nucleus where it drives expression of anti-inflammatory mediators. Targets antigen-presenting cells (APCs) such as macrophages and monocytes and inhibits their release of pro-inflammatory cytokines including granulocyte-macrophage colony-stimulating factor /GM-CSF, granulocyte colony-stimulating factor/G-CSF, IL-1 alpha, IL-1 beta, IL-6, IL-8 and TNF-alpha. Also interferes with antigen presentation by reducing the expression of MHC-class II and co-stimulatory molecules, thereby inhibiting their ability to induce T cell activation. In addition, controls the inflammatory response of macrophages by reprogramming essential metabolic pathways including mTOR signaling. The chain is Interleukin-10 (IL10) from Macaca nemestrina (Pig-tailed macaque).